The chain runs to 216 residues: MSKVSRESLNEAIAEVLKGSSEKPRKFRETIELQIGLKNYDPQKDKRFSGSIRLKHIPRPNMKVCVFGDQHHLDEAAAGDIPSMSADDLKKLNKQKKLIKKLAKSYDAFIASESLIKQIPRILGPGLNKAGKFPSVVTHGESLQSKSDEIRATVKFQMKKVLCLSVAVGHVGLTQEELVSNISLSINFLVSLLKKNWQNVRSLNIKSTMGKPQRVY.

Belongs to the universal ribosomal protein uL1 family.

This is Large ribosomal subunit protein uL1 from Caenorhabditis elegans.